Reading from the N-terminus, the 513-residue chain is GMP synthase [glutamine-hydrolyzing] (513 aa).

The Glutamine amidotransferase type-1 domain occupies 3 to 200 (SVLVLDFGSQ…LLNIAGITPD (198 aa)). Cys-80 acts as the Nucleophile in catalysis. Catalysis depends on residues His-174 and Glu-176. In terms of domain architecture, GMPS ATP-PPase spans 201–388 (WSSKSFIDHQ…LGIAEDILMR (188 aa)). An ATP-binding site is contributed by 228-234 (SGGVDST).

Homodimer.

It catalyses the reaction XMP + L-glutamine + ATP + H2O = GMP + L-glutamate + AMP + diphosphate + 2 H(+). Its pathway is purine metabolism; GMP biosynthesis; GMP from XMP (L-Gln route): step 1/1. Functionally, catalyzes the synthesis of GMP from XMP. The protein is GMP synthase [glutamine-hydrolyzing] of Chlorobium phaeovibrioides (strain DSM 265 / 1930) (Prosthecochloris vibrioformis (strain DSM 265)).